Here is a 354-residue protein sequence, read N- to C-terminus: Uroporphyrinogen decarboxylase (354 aa).

Residues 27 to 31 (RQAGR), aspartate 77, tyrosine 154, threonine 209, and histidine 327 contribute to the substrate site.

This sequence belongs to the uroporphyrinogen decarboxylase family. Homodimer.

Its subcellular location is the cytoplasm. It carries out the reaction uroporphyrinogen III + 4 H(+) = coproporphyrinogen III + 4 CO2. It participates in porphyrin-containing compound metabolism; protoporphyrin-IX biosynthesis; coproporphyrinogen-III from 5-aminolevulinate: step 4/4. Its function is as follows. Catalyzes the decarboxylation of four acetate groups of uroporphyrinogen-III to yield coproporphyrinogen-III. The chain is Uroporphyrinogen decarboxylase from Salmonella agona (strain SL483).